Reading from the N-terminus, the 344-residue chain is Holliday junction branch migration complex subunit RuvB (344 aa).

Positions 4–194 (CLLRFCYNSL…FGITGHMEYY (191 aa)) are large ATPase domain (RuvB-L). Residues leucine 33, arginine 34, glycine 75, lysine 78, threonine 79, threonine 80, 141 to 143 (EDF), arginine 184, tyrosine 194, and arginine 231 contribute to the ATP site. Threonine 79 lines the Mg(2+) pocket. The interval 195 to 265 (TDIDLTEIVE…ITDKALTMLD (71 aa)) is small ATPAse domain (RuvB-S). Positions 268–344 (HEGLDYVDQK…YEHLGYRYTE (77 aa)) are head domain (RuvB-H). DNA contacts are provided by arginine 304, arginine 323, arginine 325, and arginine 328.

The protein belongs to the RuvB family. As to quaternary structure, homohexamer. Forms an RuvA(8)-RuvB(12)-Holliday junction (HJ) complex. HJ DNA is sandwiched between 2 RuvA tetramers; dsDNA enters through RuvA and exits via RuvB. An RuvB hexamer assembles on each DNA strand where it exits the tetramer. Each RuvB hexamer is contacted by two RuvA subunits (via domain III) on 2 adjacent RuvB subunits; this complex drives branch migration. In the full resolvosome a probable DNA-RuvA(4)-RuvB(12)-RuvC(2) complex forms which resolves the HJ.

The protein resides in the cytoplasm. The catalysed reaction is ATP + H2O = ADP + phosphate + H(+). In terms of biological role, the RuvA-RuvB-RuvC complex processes Holliday junction (HJ) DNA during genetic recombination and DNA repair, while the RuvA-RuvB complex plays an important role in the rescue of blocked DNA replication forks via replication fork reversal (RFR). RuvA specifically binds to HJ cruciform DNA, conferring on it an open structure. The RuvB hexamer acts as an ATP-dependent pump, pulling dsDNA into and through the RuvAB complex. RuvB forms 2 homohexamers on either side of HJ DNA bound by 1 or 2 RuvA tetramers; 4 subunits per hexamer contact DNA at a time. Coordinated motions by a converter formed by DNA-disengaged RuvB subunits stimulates ATP hydrolysis and nucleotide exchange. Immobilization of the converter enables RuvB to convert the ATP-contained energy into a lever motion, pulling 2 nucleotides of DNA out of the RuvA tetramer per ATP hydrolyzed, thus driving DNA branch migration. The RuvB motors rotate together with the DNA substrate, which together with the progressing nucleotide cycle form the mechanistic basis for DNA recombination by continuous HJ branch migration. Branch migration allows RuvC to scan DNA until it finds its consensus sequence, where it cleaves and resolves cruciform DNA. This chain is Holliday junction branch migration complex subunit RuvB, found in Streptococcus mutans serotype c (strain ATCC 700610 / UA159).